We begin with the raw amino-acid sequence, 184 residues long: ATP synthase subunit b, chloroplastic (184 aa).

Residues Leu27 to Leu49 form a helical membrane-spanning segment.

It belongs to the ATPase B chain family. As to quaternary structure, F-type ATPases have 2 components, F(1) - the catalytic core - and F(0) - the membrane proton channel. F(1) has five subunits: alpha(3), beta(3), gamma(1), delta(1), epsilon(1). F(0) has four main subunits: a(1), b(1), b'(1) and c(10-14). The alpha and beta chains form an alternating ring which encloses part of the gamma chain. F(1) is attached to F(0) by a central stalk formed by the gamma and epsilon chains, while a peripheral stalk is formed by the delta, b and b' chains.

The protein localises to the plastid. It localises to the chloroplast thylakoid membrane. F(1)F(0) ATP synthase produces ATP from ADP in the presence of a proton or sodium gradient. F-type ATPases consist of two structural domains, F(1) containing the extramembraneous catalytic core and F(0) containing the membrane proton channel, linked together by a central stalk and a peripheral stalk. During catalysis, ATP synthesis in the catalytic domain of F(1) is coupled via a rotary mechanism of the central stalk subunits to proton translocation. Its function is as follows. Component of the F(0) channel, it forms part of the peripheral stalk, linking F(1) to F(0). This is ATP synthase subunit b, chloroplastic from Lactuca sativa (Garden lettuce).